We begin with the raw amino-acid sequence, 356 residues long: Magnesium-protoporphyrin IX monomethyl ester [oxidative] cyclase (356 aa).

The protein belongs to the AcsF family. Fe cation serves as cofactor.

The enzyme catalyses Mg-protoporphyrin IX 13-monomethyl ester + 3 NADPH + 3 O2 + 2 H(+) = 3,8-divinyl protochlorophyllide a + 3 NADP(+) + 5 H2O. The protein operates within porphyrin-containing compound metabolism; chlorophyll biosynthesis (light-independent). Functionally, catalyzes the formation of the isocyclic ring in chlorophyll biosynthesis. Mediates the cyclase reaction, which results in the formation of divinylprotochlorophyllide (Pchlide) characteristic of all chlorophylls from magnesium-protoporphyrin IX 13-monomethyl ester (MgPMME). The chain is Magnesium-protoporphyrin IX monomethyl ester [oxidative] cyclase from Parasynechococcus marenigrum (strain WH8102).